The sequence spans 348 residues: Centromere protein N (348 aa).

It belongs to the CENP-N/CHL4 family.

It localises to the nucleus. It is found in the chromosome. The protein localises to the centromere. In terms of biological role, probable component of a centromeric complex involved in assembly of kinetochore proteins, mitotic progression and chromosome segregation. The chain is Centromere protein N (cenpn) from Xenopus tropicalis (Western clawed frog).